We begin with the raw amino-acid sequence, 267 residues long: 4-hydroxy-tetrahydrodipicolinate reductase (267 aa).

8–13 (GAAGRM) contacts NAD(+). Position 35 (Arg35) interacts with NADP(+). Residues 98-100 (GTT) and 122-125 (AANF) contribute to the NAD(+) site. Residue His155 is the Proton donor/acceptor of the active site. Residue His156 coordinates (S)-2,3,4,5-tetrahydrodipicolinate. The Proton donor role is filled by Lys159. 165 to 166 (GT) contacts (S)-2,3,4,5-tetrahydrodipicolinate.

It belongs to the DapB family.

It localises to the cytoplasm. The enzyme catalyses (S)-2,3,4,5-tetrahydrodipicolinate + NAD(+) + H2O = (2S,4S)-4-hydroxy-2,3,4,5-tetrahydrodipicolinate + NADH + H(+). It carries out the reaction (S)-2,3,4,5-tetrahydrodipicolinate + NADP(+) + H2O = (2S,4S)-4-hydroxy-2,3,4,5-tetrahydrodipicolinate + NADPH + H(+). The protein operates within amino-acid biosynthesis; L-lysine biosynthesis via DAP pathway; (S)-tetrahydrodipicolinate from L-aspartate: step 4/4. Catalyzes the conversion of 4-hydroxy-tetrahydrodipicolinate (HTPA) to tetrahydrodipicolinate. The protein is 4-hydroxy-tetrahydrodipicolinate reductase of Azotobacter vinelandii (strain DJ / ATCC BAA-1303).